A 31-amino-acid polypeptide reads, in one-letter code: MNIDIVSMAWAALMVVFTFSLSLVIWGRSGL.

A helical transmembrane segment spans residues 5–25 (IVSMAWAALMVVFTFSLSLVI).

The protein belongs to the PetN family. In terms of assembly, the 4 large subunits of the cytochrome b6-f complex are cytochrome b6, subunit IV (17 kDa polypeptide, PetD), cytochrome f and the Rieske protein, while the 4 small subunits are PetG, PetL, PetM and PetN. The complex functions as a dimer.

Its subcellular location is the plastid membrane. Component of the cytochrome b6-f complex, which mediates electron transfer between photosystem II (PSII) and photosystem I (PSI), cyclic electron flow around PSI, and state transitions. In Cuscuta gronovii (Common dodder), this protein is Cytochrome b6-f complex subunit 8.